The primary structure comprises 66 residues: Ornithorhynchus venom defensin-like peptide A (66 aa).

An N-terminal signal peptide occupies residues 1-22; that stretch reads MRLTYLLLLLVAVLFQAGSGSA. Residues 23–24 constitute a propeptide that is removed on maturation; sequence EP. Disulfide bonds link Cys33/Cys63, Cys40/Cys56, and Cys48/Cys64.

As to expression, produced by the crural gland and detected in venom from the spur located on each male hind leg. Is the only OvDLP that is expressed in venom gland alone.

It localises to the secreted. In terms of biological role, does not show antimicrobial, myotoxic, hemolytic and cell-promoting activities. The sequence is that of Ornithorhynchus venom defensin-like peptide A from Ornithorhynchus anatinus (Duckbill platypus).